We begin with the raw amino-acid sequence, 1057 residues long: Carbamoyl phosphate synthase large chain (1057 aa).

The tract at residues 1 to 401 (MPKRDDIQTI…SLLKAIRSLE (401 aa)) is carboxyphosphate synthetic domain. 12 residues coordinate ATP: Arg129, Arg169, Gly175, Gly176, Lys208, Ile210, Glu215, Gly241, Ile242, His243, Gln284, and Glu298. The region spanning 133–327 (RTLMNDLNVP…IAKLAAKIAV (195 aa)) is the ATP-grasp 1 domain. 3 residues coordinate Mg(2+): Gln284, Glu298, and Asn300. The Mn(2+) site is built by Gln284, Glu298, and Asn300. The oligomerization domain stretch occupies residues 402–546 (YGVHHLGLPN…YGTYEDENES (145 aa)). The segment at 547–929 (IVTDKEKILV…ALYKGLTGSG (383 aa)) is carbamoyl phosphate synthetic domain. The region spanning 671-861 (EALLREISVP…MAQLAMRAIM (191 aa)) is the ATP-grasp 2 domain. Arg707, Arg746, Leu748, Glu752, Gly777, Val778, His779, Ser780, Gln820, and Glu832 together coordinate ATP. Gln820, Glu832, and Asn834 together coordinate Mg(2+). Mn(2+)-binding residues include Gln820, Glu832, and Asn834. The region spanning 930 to 1057 (FEVKDHGTVL…ESMTFTMRNV (128 aa)) is the MGS-like domain. Residues 930–1057 (FEVKDHGTVL…ESMTFTMRNV (128 aa)) are allosteric domain.

It belongs to the CarB family. In terms of assembly, composed of two chains; the small (or glutamine) chain promotes the hydrolysis of glutamine to ammonia, which is used by the large (or ammonia) chain to synthesize carbamoyl phosphate. Tetramer of heterodimers (alpha,beta)4. Requires Mg(2+) as cofactor. The cofactor is Mn(2+).

The enzyme catalyses hydrogencarbonate + L-glutamine + 2 ATP + H2O = carbamoyl phosphate + L-glutamate + 2 ADP + phosphate + 2 H(+). It catalyses the reaction hydrogencarbonate + NH4(+) + 2 ATP = carbamoyl phosphate + 2 ADP + phosphate + 2 H(+). It participates in amino-acid biosynthesis; L-arginine biosynthesis; carbamoyl phosphate from bicarbonate: step 1/1. Its pathway is pyrimidine metabolism; UMP biosynthesis via de novo pathway; (S)-dihydroorotate from bicarbonate: step 1/3. In terms of biological role, large subunit of the glutamine-dependent carbamoyl phosphate synthetase (CPSase). CPSase catalyzes the formation of carbamoyl phosphate from the ammonia moiety of glutamine, carbonate, and phosphate donated by ATP, constituting the first step of 2 biosynthetic pathways, one leading to arginine and/or urea and the other to pyrimidine nucleotides. The large subunit (synthetase) binds the substrates ammonia (free or transferred from glutamine from the small subunit), hydrogencarbonate and ATP and carries out an ATP-coupled ligase reaction, activating hydrogencarbonate by forming carboxy phosphate which reacts with ammonia to form carbamoyl phosphate. The sequence is that of Carbamoyl phosphate synthase large chain from Staphylococcus epidermidis (strain ATCC 35984 / DSM 28319 / BCRC 17069 / CCUG 31568 / BM 3577 / RP62A).